The sequence spans 399 residues: Zona occludens toxin (399 aa).

Its function is as follows. Increases the permeability of the small intestine mucosa by affecting the structure of intercellular tight junctions (zonula occludens). The sequence is that of Zona occludens toxin (zot) from Vibrio cholerae serotype O1 (strain ATCC 39315 / El Tor Inaba N16961).